We begin with the raw amino-acid sequence, 33 residues long: Brevinin-2 (33 aa).

A disulfide bridge connects residues Cys27 and Cys33.

It belongs to the frog skin active peptide (FSAP) family. Brevinin subfamily. As to expression, expressed by the skin glands.

It localises to the secreted. Shows antibacterial activity against representative Gram-negative and Gram-positive bacterial species, and a very high hemolytic activity. The chain is Brevinin-2 from Pelophylax porosus brevipodus (Nagoya Daruma pond frog).